The following is a 143-amino-acid chain: Peptide methionine sulfoxide reductase MsrB (143 aa).

In terms of domain architecture, MsrB spans 16–139; it reads DAELRRRLTP…NSAALNFESR (124 aa). Residues cysteine 55, cysteine 58, cysteine 104, and cysteine 107 each contribute to the Zn(2+) site. The Nucleophile role is filled by cysteine 128.

Belongs to the MsrB Met sulfoxide reductase family. Requires Zn(2+) as cofactor.

It catalyses the reaction L-methionyl-[protein] + [thioredoxin]-disulfide + H2O = L-methionyl-(R)-S-oxide-[protein] + [thioredoxin]-dithiol. This Burkholderia vietnamiensis (strain G4 / LMG 22486) (Burkholderia cepacia (strain R1808)) protein is Peptide methionine sulfoxide reductase MsrB.